Here is a 156-residue protein sequence, read N- to C-terminus: SsrA-binding protein (156 aa).

It belongs to the SmpB family.

It is found in the cytoplasm. Its function is as follows. Required for rescue of stalled ribosomes mediated by trans-translation. Binds to transfer-messenger RNA (tmRNA), required for stable association of tmRNA with ribosomes. tmRNA and SmpB together mimic tRNA shape, replacing the anticodon stem-loop with SmpB. tmRNA is encoded by the ssrA gene; the 2 termini fold to resemble tRNA(Ala) and it encodes a 'tag peptide', a short internal open reading frame. During trans-translation Ala-aminoacylated tmRNA acts like a tRNA, entering the A-site of stalled ribosomes, displacing the stalled mRNA. The ribosome then switches to translate the ORF on the tmRNA; the nascent peptide is terminated with the 'tag peptide' encoded by the tmRNA and targeted for degradation. The ribosome is freed to recommence translation, which seems to be the essential function of trans-translation. The chain is SsrA-binding protein from Paracoccus denitrificans (strain Pd 1222).